Reading from the N-terminus, the 315-residue chain is Ornithine carbamoyltransferase (315 aa).

Residues 53–56 (STRT), Gln-80, Arg-104, and 131–134 (HPCQ) contribute to the carbamoyl phosphate site. Residues Asn-163, Asp-227, and 231–232 (SM) each bind L-ornithine. Residues 267-268 (CL) and Arg-295 contribute to the carbamoyl phosphate site.

The protein belongs to the aspartate/ornithine carbamoyltransferase superfamily. OTCase family.

The protein localises to the cytoplasm. The catalysed reaction is carbamoyl phosphate + L-ornithine = L-citrulline + phosphate + H(+). The protein operates within amino-acid degradation; L-arginine degradation via ADI pathway; carbamoyl phosphate from L-arginine: step 2/2. Functionally, reversibly catalyzes the transfer of the carbamoyl group from carbamoyl phosphate (CP) to the N(epsilon) atom of ornithine (ORN) to produce L-citrulline. In Rhodococcus opacus (strain B4), this protein is Ornithine carbamoyltransferase.